The following is a 161-amino-acid chain: Nucleotide-binding protein Shew_2893 (161 aa).

The protein belongs to the YajQ family.

Nucleotide-binding protein. The polypeptide is Nucleotide-binding protein Shew_2893 (Shewanella loihica (strain ATCC BAA-1088 / PV-4)).